A 263-amino-acid chain; its full sequence is Glucosamine-6-phosphate deaminase (263 aa).

Catalysis depends on Asp67, which acts as the Proton acceptor; for enolization step. The For ring-opening step role is filled by Asn136. The active-site Proton acceptor; for ring-opening step is the His138. Residue Glu143 is the For ring-opening step of the active site.

This sequence belongs to the glucosamine/galactosamine-6-phosphate isomerase family. NagB subfamily. As to quaternary structure, homohexamer.

It catalyses the reaction alpha-D-glucosamine 6-phosphate + H2O = beta-D-fructose 6-phosphate + NH4(+). The protein operates within amino-sugar metabolism; N-acetylneuraminate degradation; D-fructose 6-phosphate from N-acetylneuraminate: step 5/5. Functionally, catalyzes the reversible isomerization-deamination of glucosamine 6-phosphate (GlcN6P) to form fructose 6-phosphate (Fru6P) and ammonium ion. The sequence is that of Glucosamine-6-phosphate deaminase from Shewanella halifaxensis (strain HAW-EB4).